Here is a 424-residue protein sequence, read N- to C-terminus: Serine--tRNA ligase (424 aa).

Residue T232–E234 participates in L-serine binding. R263–E265 provides a ligand contact to ATP. E286 contacts L-serine. E350–S353 is an ATP binding site. S385 is a binding site for L-serine.

It belongs to the class-II aminoacyl-tRNA synthetase family. Type-1 seryl-tRNA synthetase subfamily. Homodimer. The tRNA molecule binds across the dimer.

The protein resides in the cytoplasm. It catalyses the reaction tRNA(Ser) + L-serine + ATP = L-seryl-tRNA(Ser) + AMP + diphosphate + H(+). The catalysed reaction is tRNA(Sec) + L-serine + ATP = L-seryl-tRNA(Sec) + AMP + diphosphate + H(+). Its pathway is aminoacyl-tRNA biosynthesis; selenocysteinyl-tRNA(Sec) biosynthesis; L-seryl-tRNA(Sec) from L-serine and tRNA(Sec): step 1/1. Catalyzes the attachment of serine to tRNA(Ser). Is also able to aminoacylate tRNA(Sec) with serine, to form the misacylated tRNA L-seryl-tRNA(Sec), which will be further converted into selenocysteinyl-tRNA(Sec). The protein is Serine--tRNA ligase of Latilactobacillus sakei subsp. sakei (strain 23K) (Lactobacillus sakei subsp. sakei).